Here is a 453-residue protein sequence, read N- to C-terminus: Secreted aspartic protease 10 (453 aa).

The signal sequence occupies residues 1–20 (MDLVIMNFVFLLYLTSVVKC). The region spanning 52 to 372 (YTTELEIGSN…DLQDMTISVA (321 aa)) is the Peptidase A1 domain. The active site involves D70. Residue 70–72 (DTG) participates in pepstatin A binding. A disulfide bridge links C85 with C112. N-linked (GlcNAc...) asparagine glycosylation is found at N115 and N128. 138-139 (VD) is a pepstatin A binding site. N-linked (GlcNAc...) asparagine glycosylation is found at N168, N208, N211, and N245. Residue D266 is part of the active site. Pepstatin A is bound at residue 266–270 (DTGST). N287 is a glycosylation site (N-linked (GlcNAc...) asparagine). C301 and C333 are joined by a disulfide. Residues 387-432 (NPNEDQNEVPTSTSFTQSASSSGSQPSSTISGENMDKNTTSSSSGN) are disordered. Residues 397–417 (TSTSFTQSASSSGSQPSSTIS) show a composition bias toward low complexity. Residues 423–432 (KNTTSSSSGN) are compositionally biased toward polar residues. N424 carries an N-linked (GlcNAc...) asparagine glycan. The GPI-anchor amidated serine moiety is linked to residue S429. Residues 430-453 (SGNCQTRSWIAILSALFLVYIHII) constitute a propeptide, removed in mature form.

It belongs to the peptidase A1 family. Post-translationally, the GPI-anchor is attached to the protein in the endoplasmic reticulum and serves to target the protein to the cell surface. There, the glucosamine-inositol phospholipid moiety is cleaved off and the GPI-modified mannoprotein is covalently attached via its lipidless GPI glycan remnant to the 1,6-beta-glucan of the outer cell wall layer.

The protein resides in the secreted. The protein localises to the cell membrane. The catalysed reaction is Preferential cleavage at the carboxyl of hydrophobic amino acids, but fails to cleave 15-Leu-|-Tyr-16, 16-Tyr-|-Leu-17 and 24-Phe-|-Phe-25 of insulin B chain. Activates trypsinogen, and degrades keratin.. Functionally, secreted aspartic peptidases (SAPs) are a group of ten acidic hydrolases considered as key virulence factors. These enzymes supply the fungus with nutrient amino acids as well as are able to degrade the selected host's proteins involved in the immune defense. Required for cell surface integrity and cell separation during budding. This is Secreted aspartic protease 10 from Candida albicans (strain SC5314 / ATCC MYA-2876) (Yeast).